A 383-amino-acid chain; its full sequence is Cell division protein FtsZ (383 aa).

GTP-binding positions include 20–24 (GGGGN), 107–109 (GTG), glutamate 138, arginine 142, and asparagine 186.

The protein belongs to the FtsZ family. As to quaternary structure, homodimer. Polymerizes to form a dynamic ring structure in a strictly GTP-dependent manner. Interacts directly with several other division proteins.

Its subcellular location is the cytoplasm. Essential cell division protein that forms a contractile ring structure (Z ring) at the future cell division site. The regulation of the ring assembly controls the timing and the location of cell division. One of the functions of the FtsZ ring is to recruit other cell division proteins to the septum to produce a new cell wall between the dividing cells. Binds GTP and shows GTPase activity. In Shigella flexneri, this protein is Cell division protein FtsZ.